Here is a 242-residue protein sequence, read N- to C-terminus: Ribonuclease PH (242 aa).

Residues Arg89 and 127–129 (GTR) contribute to the phosphate site.

It belongs to the RNase PH family. Homohexameric ring arranged as a trimer of dimers.

The catalysed reaction is tRNA(n+1) + phosphate = tRNA(n) + a ribonucleoside 5'-diphosphate. Phosphorolytic 3'-5' exoribonuclease that plays an important role in tRNA 3'-end maturation. Removes nucleotide residues following the 3'-CCA terminus of tRNAs; can also add nucleotides to the ends of RNA molecules by using nucleoside diphosphates as substrates, but this may not be physiologically important. Probably plays a role in initiation of 16S rRNA degradation (leading to ribosome degradation) during starvation. The sequence is that of Ribonuclease PH from Neisseria gonorrhoeae (strain ATCC 700825 / FA 1090).